Reading from the N-terminus, the 390-residue chain is S-adenosylmethionine synthase 4 (390 aa).

Glutamate 9 contributes to the Mg(2+) binding site. Histidine 15 serves as a coordination point for ATP. K(+) is bound at residue glutamate 43. The L-methionine site is built by glutamate 56 and glutamine 99. ATP-binding positions include 167–169 (DGK), 235–238 (SGRF), aspartate 246, 252–253 (RK), alanine 269, lysine 273, and lysine 277. L-methionine is bound at residue aspartate 246. Lysine 277 is a binding site for L-methionine.

The protein belongs to the AdoMet synthase family. Homotetramer. Mn(2+) is required as a cofactor. Mg(2+) serves as cofactor. Requires Co(2+) as cofactor. It depends on K(+) as a cofactor. In terms of tissue distribution, mostly expressed in flowers, seedpods and roots, and, to a lower extent, in stems and leaves.

The protein localises to the cytoplasm. It catalyses the reaction L-methionine + ATP + H2O = S-adenosyl-L-methionine + phosphate + diphosphate. Its pathway is amino-acid biosynthesis; S-adenosyl-L-methionine biosynthesis; S-adenosyl-L-methionine from L-methionine: step 1/1. Catalyzes the formation of S-adenosylmethionine from methionine and ATP. The reaction comprises two steps that are both catalyzed by the same enzyme: formation of S-adenosylmethionine (AdoMet) and triphosphate, and subsequent hydrolysis of the triphosphate. The polypeptide is S-adenosylmethionine synthase 4 (MSAMS4) (Brassica juncea (Indian mustard)).